The primary structure comprises 1021 residues: Sodium/potassium-transporting ATPase subunit alpha-1 (1021 aa).

Residues 1–5 (MGKGA) constitute a propeptide that is removed on maturation. Positions 1–11 (MGKGAGRDKYE) are enriched in basic and acidic residues. Positions 1-31 (MGKGAGRDKYEPTATSEHGTKKKKAKERDMD) are disordered. Topologically, residues 6 to 85 (GRDKYEPTAT…NTLTPPPTTP (80 aa)) are cytoplasmic. Tyr-10 carries the phosphotyrosine modification. Phosphoserine; by PKC is present on Ser-16. A phosphoinositide-3 kinase binding region spans residues 80 to 82 (PPP). A helical membrane pass occupies residues 86 to 106 (EWVKFCRQLFGGFSLLLWIGS). Residues 107 to 129 (LLCFLAYGITSVMEGEPNSDNLY) are Extracellular-facing. The chain crosses the membrane as a helical span at residues 130–150 (LGVVLAAVVIITGCFSYYQEA). The Cytoplasmic segment spans residues 151–286 (KSSKIMESFK…GGKTPIAMEI (136 aa)). A disordered region spans residues 214–233 (SSLTGESEPQTRSPDFSNEN). A helical transmembrane segment spans residues 287-306 (EHFIHLITGVAVFLGVSFFI). Residues 307 to 318 (LSLILEYTWLEA) are Extracellular-facing. The chain crosses the membrane as a helical span at residues 319-336 (VIFLIGIIVANVPEGLLA). Residues 337–770 (TVTVCLTLTA…EEGRLIFDNL (434 aa)) lie on the Cytoplasmic side of the membrane. Asp-374 (4-aspartylphosphate intermediate) is an active-site residue. Lys-485 contributes to the ATP binding site. The Mg(2+) site is built by Asp-715 and Asp-719. Residues 771-790 (KKSIAYTLTSNIPEITPFLI) form a helical membrane-spanning segment. At 791–800 (FIIANIPLPL) the chain is on the extracellular side. A helical transmembrane segment spans residues 801–821 (GTCTILCIDLGTDMVPAISLA). Over 822-841 (YEQAESDIMKRQPRNPKTDK) the chain is Cytoplasmic. Residues 842 to 864 (LVNERLISMAYGQIGMIQALGGF) traverse the membrane as a helical segment. The Extracellular portion of the chain corresponds to 865-916 (FTYFVIMAENGFLPSGLVGIRLQWDDRWINDVEDSYGQQWTFEQRKIVEFTC). A helical transmembrane segment spans residues 917 to 936 (HTAFFVSIVVVQWADLIICK). The Cytoplasmic segment spans residues 937 to 949 (TRRNSVFQQGMKN). Position 941 is a phosphoserine; by PKA (Ser-941). A helical transmembrane segment spans residues 950-968 (KILIFGLFEETALAAFLSY). Over 969–983 (CPGMDVALRMYPLKP) the chain is Extracellular. Residues 984–1004 (TWWFCAFPYSLLIFLYDEIRK) form a helical membrane-spanning segment. At 1005 to 1021 (LIIRRNPGGWVERETYY) the chain is on the cytoplasmic side.

This sequence belongs to the cation transport ATPase (P-type) (TC 3.A.3) family. Type IIC subfamily. In terms of assembly, the sodium/potassium-transporting ATPase is composed of a catalytic alpha subunit, an auxiliary non-catalytic beta subunit and an additional regulatory subunit. Phosphorylation on Tyr-10 modulates pumping activity.

The protein resides in the cell membrane. Its subcellular location is the sarcolemma. The enzyme catalyses K(+)(out) + Na(+)(in) + ATP + H2O = K(+)(in) + Na(+)(out) + ADP + phosphate + H(+). Its function is as follows. This is the catalytic component of the active enzyme, which catalyzes the hydrolysis of ATP coupled with the exchange of sodium and potassium ions across the plasma membrane. This action creates the electrochemical gradient of sodium and potassium ions, providing the energy for active transport of various nutrients. The sequence is that of Sodium/potassium-transporting ATPase subunit alpha-1 (ATP1A1) from Gallus gallus (Chicken).